Reading from the N-terminus, the 435-residue chain is MSNQETEAGSKTISNDNLNVQITRGTHCQVKFDITVKPEAVVAAYQKALKTINKEINIPGFRKGKAPQQLILEKYGSNVQKECVDIVLQTGFNDALQLTHIHPLKDGHIKRPIVHYCTQEKGAHFVLEFEARPTIPSVQPQELHLHHQAPVQVTDEERKNALDQVLLQFTTYQPIEDRPVQEGDFINVDVTILEETPRLIIDNQRTQVNQSGLPSWIQEKVIGLNAGASAEGMTQPNEKFPDPDFKSVPFRVTVKTIWQGNMPAIDDELAKKVGLQTVDELYQKLNERLEQEAQEDIYKQHIHHLEDQLIEKYPFDLPLSYIESNKQARLDDYLKQLGQESQLPQNYEEIEKMIENSTIRGLQLYFLLRRVAADNKLEVSEEEVSQELSKQIALIPSGKSQIDIYGDKSKLREQLYNLALDRKIKKFLLDQAQWV.

Positions 183–263 (GDFINVDVTI…VKTIWQGNMP (81 aa)) constitute a PPIase FKBP-type domain.

The protein belongs to the FKBP-type PPIase family. Tig subfamily.

The protein resides in the cytoplasm. It carries out the reaction [protein]-peptidylproline (omega=180) = [protein]-peptidylproline (omega=0). Involved in protein export. Acts as a chaperone by maintaining the newly synthesized protein in an open conformation. Functions as a peptidyl-prolyl cis-trans isomerase. This is Trigger factor from Protochlamydia amoebophila (strain UWE25).